We begin with the raw amino-acid sequence, 118 residues long: Late cornified envelope protein 1E (118 aa).

Low complexity predominate over residues 1 to 10 (MSCQQSQQQC). 2 disordered regions span residues 1–23 (MSCQ…CPPK) and 84–118 (RSHR…GGCC). Over residues 11-23 (QPPPKCTPKCPPK) the composition is skewed to pro residues. Over residues 92 to 103 (SSDCCSQPSGGS) the composition is skewed to low complexity. The span at 104 to 118 (SCCGGGSGQHSGGCC) shows a compositional bias: gly residues.

This sequence belongs to the LCE family. As to quaternary structure, interacts with CYSRT1. As to expression, skin-specific. Expression was readily detected in adult trunk skin, adult arm skin, fetal skin, penal skin, vulva, esophagus and tongue. Not expressed in the cervix, rectum, lung, colon, or placenta.

Precursors of the cornified envelope of the stratum corneum. This is Late cornified envelope protein 1E (LCE1E) from Homo sapiens (Human).